Here is a 439-residue protein sequence, read N- to C-terminus: tRNA-2-methylthio-N(6)-dimethylallyladenosine synthase (439 aa).

An MTTase N-terminal domain is found at 5 to 121; that stretch reads KKLFIKTYGC…LPELEAKTRA (117 aa). 6 residues coordinate [4Fe-4S] cluster: Cys-14, Cys-50, Cys-84, Cys-159, Cys-163, and Cys-166. Residues 145 to 378 form the Radical SAM core domain; sequence AKRGPTAFLT…ITRHQREIQD (234 aa). One can recognise a TRAM domain in the interval 378-439; that stretch reads DGMVGREVSV…GANSLAGELA (62 aa).

This sequence belongs to the methylthiotransferase family. MiaB subfamily. As to quaternary structure, monomer. [4Fe-4S] cluster serves as cofactor.

It is found in the cytoplasm. The enzyme catalyses N(6)-dimethylallyladenosine(37) in tRNA + (sulfur carrier)-SH + AH2 + 2 S-adenosyl-L-methionine = 2-methylsulfanyl-N(6)-dimethylallyladenosine(37) in tRNA + (sulfur carrier)-H + 5'-deoxyadenosine + L-methionine + A + S-adenosyl-L-homocysteine + 2 H(+). In terms of biological role, catalyzes the methylthiolation of N6-(dimethylallyl)adenosine (i(6)A), leading to the formation of 2-methylthio-N6-(dimethylallyl)adenosine (ms(2)i(6)A) at position 37 in tRNAs that read codons beginning with uridine. The protein is tRNA-2-methylthio-N(6)-dimethylallyladenosine synthase of Ruegeria pomeroyi (strain ATCC 700808 / DSM 15171 / DSS-3) (Silicibacter pomeroyi).